The sequence spans 172 residues: Adenine phosphoribosyltransferase (172 aa).

Belongs to the purine/pyrimidine phosphoribosyltransferase family. In terms of assembly, homodimer.

It is found in the cytoplasm. It carries out the reaction AMP + diphosphate = 5-phospho-alpha-D-ribose 1-diphosphate + adenine. It functions in the pathway purine metabolism; AMP biosynthesis via salvage pathway; AMP from adenine: step 1/1. Functionally, catalyzes a salvage reaction resulting in the formation of AMP, that is energically less costly than de novo synthesis. The sequence is that of Adenine phosphoribosyltransferase from Clostridium novyi (strain NT).